Reading from the N-terminus, the 362-residue chain is MTGPLERLARRGLFLLDPETAHGVSIKALKSGVVPSCAAPADTRLEQVIAGLNFPNPLGMAAGYDKNAEVPEALLRLGFGFTEIGTVTPRPQAGNDKPRIFRLVEDEAVINRLGFNNDGHGAALARLQACSRQALIGVNIGANKDSADRIADYVAGIRTFYAVARYFTANISSPNTPGLRDLQARESLAALLSAVLAARDEEAAKTGRRVPVFLKIAPDLTEEGMDDIAAEVLAHNLDGLIVSNTTLARDGLRDQRQAKEAGGLSGRPLFEKSTAVLARMRKRLGPDVPIIGVGGVSSAETAAEKIRAGADLVQLYSCMVYEGPGLPGRIVRGLSQLCDRDKLASIREIRDSRLDYWAGRNV.

Residues 62–66 and Thr-86 contribute to the FMN site; that span reads AGYDK. Substrate is bound at residue Lys-66. Substrate is bound at residue 111 to 115; it reads NRLGF. Residues Asn-139 and Asn-170 each coordinate FMN. Asn-170 is a binding site for substrate. Ser-173 functions as the Nucleophile in the catalytic mechanism. A substrate-binding site is contributed by Asn-175. FMN-binding residues include Lys-215 and Ser-243. 244 to 245 is a substrate binding site; the sequence is NT. FMN contacts are provided by residues Gly-266, Gly-295, and 316 to 317; that span reads YS.

It belongs to the dihydroorotate dehydrogenase family. Type 2 subfamily. In terms of assembly, monomer. Requires FMN as cofactor.

Its subcellular location is the cell membrane. It carries out the reaction (S)-dihydroorotate + a quinone = orotate + a quinol. Its pathway is pyrimidine metabolism; UMP biosynthesis via de novo pathway; orotate from (S)-dihydroorotate (quinone route): step 1/1. Catalyzes the conversion of dihydroorotate to orotate with quinone as electron acceptor. The sequence is that of Dihydroorotate dehydrogenase (quinone) from Sinorhizobium fredii (strain NBRC 101917 / NGR234).